The following is a 611-amino-acid chain: Leukotriene A-4 hydrolase (611 aa).

Residue Lys-73 is modified to N6-acetyllysine. A peptide-binding positions include 135 to 137 and 267 to 272; these read QCQ and PYGGME. His-296 lines the Zn(2+) pocket. Catalysis depends on Glu-297, which acts as the Proton acceptor. The Zn(2+) site is built by His-300 and Glu-319. Lys-337 carries the post-translational modification N6-acetyllysine. Catalysis depends on Tyr-384, which acts as the Proton donor. Lys-414 bears the N6-acetyllysine mark. At Ser-416 the chain carries Phosphoserine. 564–566 provides a ligand contact to a peptide; that stretch reads RMK. Residue Lys-573 is modified to N6-acetyllysine.

The protein belongs to the peptidase M1 family. In terms of assembly, monomer. Zn(2+) is required as a cofactor. Post-translationally, phosphorylation at Ser-416 inhibits leukotriene-A4 hydrolase activity. activity.

The protein localises to the cytoplasm. It catalyses the reaction leukotriene A4 + H2O = leukotriene B4. It carries out the reaction (5S,6S)-epoxy-(18R)-hydroxy-(7E,9E,11Z,14Z,16E)-eicosapentaenoate + H2O = resolvin E1. The catalysed reaction is (5S,6S)-epoxy-(18S)-hydroxy-(7E,9E,11Z,14Z,16E)-eicosapentaenoate + H2O = 18S-resolvin E1. The enzyme catalyses Release of the N-terminal residue from a tripeptide.. The protein operates within lipid metabolism; leukotriene B4 biosynthesis. Inhibited by bestatin. The epoxide hydrolase activity is restrained by suicide inactivation that involves binding of LTA4 to Tyr-379. 4-(4-benzylphenyl)thiazol-2-amine (ARM1) selectively inhibits the epoxide hydrolase activity. Its function is as follows. Bifunctional zinc metalloenzyme that comprises both epoxide hydrolase (EH) and aminopeptidase activities. Acts as an epoxide hydrolase to catalyze the conversion of LTA4 to the pro-inflammatory mediator leukotriene B4 (LTB4). Also has aminopeptidase activity, with high affinity for N-terminal arginines of various synthetic tripeptides. In addition to its pro-inflammatory EH activity, may also counteract inflammation by its aminopeptidase activity, which inactivates by cleavage another neutrophil attractant, the tripeptide Pro-Gly-Pro (PGP), a bioactive fragment of collagen generated by the action of matrix metalloproteinase-9 (MMP9) and prolylendopeptidase (PREPL). Involved also in the biosynthesis of resolvin E1 and 18S-resolvin E1 from eicosapentaenoic acid, two lipid mediators that show potent anti-inflammatory and pro-resolving actions. The sequence is that of Leukotriene A-4 hydrolase (LTA4H) from Bos taurus (Bovine).